Here is a 31-residue protein sequence, read N- to C-terminus: Photosystem I reaction center subunit XII (31 aa).

The chain crosses the membrane as a helical span at residues 7–26 (QVYVALVIALLPAVLAFRLS).

Belongs to the PsaM family.

The protein resides in the cellular thylakoid membrane. This chain is Photosystem I reaction center subunit XII, found in Thermosynechococcus vestitus (strain NIES-2133 / IAM M-273 / BP-1).